A 310-amino-acid chain; its full sequence is Basic salivary proline-rich protein 4 (310 aa).

An N-terminal signal peptide occupies residues 1-16 (MLLILLSVALLALSSA). The interval 14–310 (SSAESSSEDV…RPAQGQQPPQ (297 aa)) is disordered. 9 consecutive repeat copies span residues 35 to 55 (KPEGRRPQGGNQPQRPPPPPG), 56 to 76 (KPQGPPPQGGNQSQGPPPPPG), 77 to 97 (KPEGRPPQGGNQSQGPPPHPG), 98 to 118 (KPERPPPQGGNQSQGPPPHPG), 119 to 139 (KPESRPPQGGHQSQGPPPTPG), 140 to 160 (KPEGPPPQGGNQSQGTPPPPG), 161 to 181 (KPEGRPPQGGNQSQGPPPHPG), 182 to 202 (KPERPPPQGGNQSHRPPPPPG), and 203 to 223 (KPERPPPQGGNQSQGPPPHPG). The tract at residues 35–234 (KPEGRRPQGG…PEGPPPQEGN (200 aa)) is 9.5 X 21 AA tandem repeats of K-P-[EQ]-[GR]-[PR]-[PR]-P-Q-G-G-N-Q-[PS]-[QH]-[RG]-[PT]-P-P-[PH]-P-G. The span at 48 to 63 (QRPPPPPGKPQGPPPQ) shows a compositional bias: pro residues. Residues Asn-66, Asn-87, and Asn-108 are each glycosylated (N-linked (GlcNAc...) asparagine). Residues 133 to 147 (GPPPTPGKPEGPPPQ) show a composition bias toward pro residues. Residues Asn-150, Asn-171, and Asn-192 are each glycosylated (N-linked (GlcNAc...) asparagine). A compositionally biased stretch (pro residues) spans 196–210 (RPPPPPGKPERPPPQ). Asn-213 carries N-linked (GlcNAc...) asparagine glycosylation. Over residues 217–231 (GPPPHPGKPEGPPPQ) the composition is skewed to pro residues. A 10; truncated repeat occupies 224–234 (KPEGPPPQEGN). N-linked (GlcNAc...) asparagine glycosylation occurs at Asn-234. Residues 258-310 (QGPPPPGKPQGPPPAGGNPQQPQAPPAGKPQGPPPPPQGGRPPRPAQGQQPPQ) are compositionally biased toward pro residues.

In terms of processing, N-glycosylated. Post-translationally, proteolytically cleaved at the tripeptide Xaa-Pro-Gln, where Xaa in the P(3) position is mostly lysine. The endoprotease may be of microbial origin. Pyroglutamate formation found on at least Gln-46, Gln-48, Gln-67, Gln-88; Gln-90; Gln-193; Gln-288 Gln-214 and Gln-295, preferentially in diabetic, and head and neck cancer patients.

It is found in the secreted. The chain is Basic salivary proline-rich protein 4 (PRB4) from Homo sapiens (Human).